Reading from the N-terminus, the 726-residue chain is Dipeptidyl-peptidase 5 (726 aa).

The signal sequence occupies residues 1-19 (MAPAKWLIASLAFASTGLA). N-linked (GlcNAc...) asparagine glycosylation is found at N96 and N252. The segment at 268–292 (VAEPINKRNGPRTPHGIEGASSSPV) is disordered. N-linked (GlcNAc...) asparagine glycosylation occurs at N485. The Charge relay system role is filled by S558. N605 is a glycosylation site (N-linked (GlcNAc...) asparagine). Residues D641 and H673 each act as charge relay system in the active site. N699 carries N-linked (GlcNAc...) asparagine glycosylation.

It belongs to the peptidase S9C family.

The protein resides in the secreted. In terms of biological role, extracellular dipeptidyl-peptidase which removes N-terminal dipeptides sequentially from polypeptides having unsubstituted N-termini. Contributes to pathogenicity. The polypeptide is Dipeptidyl-peptidase 5 (DPP5) (Arthroderma otae (strain ATCC MYA-4605 / CBS 113480) (Microsporum canis)).